We begin with the raw amino-acid sequence, 277 residues long: Large ribosomal subunit protein uL2 (277 aa).

A disordered region spans residues 199–277; sequence DHMNTSIGKA…ILLSRHKRKK (79 aa). Positions 209 to 220 are enriched in basic residues; the sequence is GRNRWLGRKPHN.

The protein belongs to the universal ribosomal protein uL2 family. In terms of assembly, part of the 50S ribosomal subunit. Forms a bridge to the 30S subunit in the 70S ribosome.

One of the primary rRNA binding proteins. Required for association of the 30S and 50S subunits to form the 70S ribosome, for tRNA binding and peptide bond formation. It has been suggested to have peptidyltransferase activity; this is somewhat controversial. Makes several contacts with the 16S rRNA in the 70S ribosome. This chain is Large ribosomal subunit protein uL2, found in Bradyrhizobium diazoefficiens (strain JCM 10833 / BCRC 13528 / IAM 13628 / NBRC 14792 / USDA 110).